Reading from the N-terminus, the 234-residue chain is Large ribosomal subunit protein uL1 (234 aa).

This sequence belongs to the universal ribosomal protein uL1 family. In terms of assembly, part of the 50S ribosomal subunit.

Functionally, binds directly to 23S rRNA. The L1 stalk is quite mobile in the ribosome, and is involved in E site tRNA release. Protein L1 is also a translational repressor protein, it controls the translation of the L11 operon by binding to its mRNA. This is Large ribosomal subunit protein uL1 from Psychromonas ingrahamii (strain DSM 17664 / CCUG 51855 / 37).